The following is a 375-amino-acid chain: Methylthioribose-1-phosphate isomerase (375 aa).

The active-site Proton donor is Asp257.

This sequence belongs to the eIF-2B alpha/beta/delta subunits family. MtnA subfamily.

The protein localises to the cytoplasm. The protein resides in the nucleus. It carries out the reaction 5-(methylsulfanyl)-alpha-D-ribose 1-phosphate = 5-(methylsulfanyl)-D-ribulose 1-phosphate. The protein operates within amino-acid biosynthesis; L-methionine biosynthesis via salvage pathway; L-methionine from S-methyl-5-thio-alpha-D-ribose 1-phosphate: step 1/6. Functionally, catalyzes the interconversion of methylthioribose-1-phosphate (MTR-1-P) into methylthioribulose-1-phosphate (MTRu-1-P). In Leishmania infantum, this protein is Methylthioribose-1-phosphate isomerase.